Here is a 583-residue protein sequence, read N- to C-terminus: Complement factor I (583 aa).

A signal peptide spans 1–18; it reads MKLLHVFLLFLCFHLSFC. 16 disulfides stabilise this stretch: cysteine 33/cysteine 255, cysteine 43/cysteine 54, cysteine 48/cysteine 59, cysteine 61/cysteine 93, cysteine 67/cysteine 86, cysteine 75/cysteine 106, cysteine 141/cysteine 181, cysteine 154/cysteine 214, cysteine 186/cysteine 196, cysteine 229/cysteine 247, cysteine 259/cysteine 271, cysteine 266/cysteine 284, cysteine 278/cysteine 293, cysteine 327/cysteine 453, cysteine 365/cysteine 381, and cysteine 373/cysteine 444. Positions 55 to 108 constitute a Kazal-like domain; sequence IEGTCICKLPYQCPKNGTTVCATNGRSFPTYCQQKSLECLRPGTKFLNNGTCTA. 4 N-linked (GlcNAc...) asparagine glycosylation sites follow: asparagine 70, asparagine 103, asparagine 173, and asparagine 177. In terms of domain architecture, SRCR spans 114-212; the sequence is VSLKHGNTDS…TMGYQDLADV (99 aa). LDL-receptor class A domains are found at residues 213–257 and 258–294; these read VCYT…LCCK and ACQG…VGCE. Residues lysine 239, aspartate 242, isoleucine 244, aspartate 246, aspartate 252, and glutamate 253 each contribute to the Ca(2+) site. Tyrosine 276, asparagine 279, glutamate 281, aspartate 283, aspartate 289, and glutamate 290 together coordinate Ca(2+). The 235-residue stretch at 340–574 folds into the Peptidase S1 domain; that stretch reads IVGGKRAQLG…YFDWISYHVG (235 aa). Active-site charge relay system residues include histidine 380 and aspartate 429. Residues asparagine 464 and asparagine 494 are each glycosylated (N-linked (GlcNAc...) asparagine). Cystine bridges form between cysteine 467–cysteine 531, cysteine 495–cysteine 510, and cysteine 521–cysteine 550. Residue serine 525 is the Charge relay system of the active site. The N-linked (GlcNAc...) asparagine glycan is linked to asparagine 536.

Belongs to the peptidase S1 family. In terms of assembly, heterodimer of a light and heavy chains; disulfide-linked. The fully processed and mature protein circulates as a zymogen, and is allosterically activated by substrate-induced remodeling of the active site. As to expression, plasma.

The protein localises to the secreted. It is found in the extracellular space. It catalyses the reaction Inactivates complement subcomponents C3b, iC3b and C4b by proteolytic cleavage.. In terms of biological role, responsible for cleaving the alpha-chains of C4b and C3b in the presence of the cofactors C4-binding protein and factor H respectively. The chain is Complement factor I (CFI) from Pongo abelii (Sumatran orangutan).